The sequence spans 332 residues: Phosphate acyltransferase (332 aa).

It belongs to the PlsX family. Homodimer. Probably interacts with PlsY.

Its subcellular location is the cytoplasm. The enzyme catalyses a fatty acyl-[ACP] + phosphate = an acyl phosphate + holo-[ACP]. Its pathway is lipid metabolism; phospholipid metabolism. Catalyzes the reversible formation of acyl-phosphate (acyl-PO(4)) from acyl-[acyl-carrier-protein] (acyl-ACP). This enzyme utilizes acyl-ACP as fatty acyl donor, but not acyl-CoA. This chain is Phosphate acyltransferase, found in Streptococcus sanguinis (strain SK36).